A 292-amino-acid polypeptide reads, in one-letter code: Mycothiol acetyltransferase (292 aa).

N-acetyltransferase domains are found at residues 2–138 (AEVV…PSAP) and 141–292 (VTVR…YAHS). Glu-33 is a 1D-myo-inositol 2-(L-cysteinylamino)-2-deoxy-alpha-D-glucopyranoside binding site. 68 to 70 (AVV) is a binding site for acetyl-CoA. Residues Glu-168, Lys-215, and Glu-225 each contribute to the 1D-myo-inositol 2-(L-cysteinylamino)-2-deoxy-alpha-D-glucopyranoside site. Residues 229-231 (VAV) and 236-242 (QGRGLGR) each bind acetyl-CoA. 1D-myo-inositol 2-(L-cysteinylamino)-2-deoxy-alpha-D-glucopyranoside is bound at residue Tyr-263. 268-273 (NAAALH) lines the acetyl-CoA pocket.

Belongs to the acetyltransferase family. MshD subfamily. In terms of assembly, monomer.

The enzyme catalyses 1D-myo-inositol 2-(L-cysteinylamino)-2-deoxy-alpha-D-glucopyranoside + acetyl-CoA = mycothiol + CoA + H(+). Its function is as follows. Catalyzes the transfer of acetyl from acetyl-CoA to desacetylmycothiol (Cys-GlcN-Ins) to form mycothiol. The polypeptide is Mycothiol acetyltransferase (Tsukamurella paurometabola (strain ATCC 8368 / DSM 20162 / CCUG 35730 / CIP 100753 / JCM 10117 / KCTC 9821 / NBRC 16120 / NCIMB 702349 / NCTC 13040) (Corynebacterium paurometabolum)).